A 274-amino-acid chain; its full sequence is 2,3,4,5-tetrahydropyridine-2,6-dicarboxylate N-succinyltransferase (274 aa).

Substrate-binding residues include R104 and D141.

This sequence belongs to the transferase hexapeptide repeat family. Homotrimer.

It is found in the cytoplasm. It carries out the reaction (S)-2,3,4,5-tetrahydrodipicolinate + succinyl-CoA + H2O = (S)-2-succinylamino-6-oxoheptanedioate + CoA. The protein operates within amino-acid biosynthesis; L-lysine biosynthesis via DAP pathway; LL-2,6-diaminopimelate from (S)-tetrahydrodipicolinate (succinylase route): step 1/3. The sequence is that of 2,3,4,5-tetrahydropyridine-2,6-dicarboxylate N-succinyltransferase from Escherichia coli O139:H28 (strain E24377A / ETEC).